The primary structure comprises 275 residues: AQSVPYGISQIKAPALHSQGYTGSNVKVAVIDSGIDSSHPDLNVRGGASFVPSETNPYQDGSSHGTHVAGTIAALNNSIGVLGVAPSSALYAVKVLDSTGSGQYSWIINGIEWAISNNMDVINMSLGGPTGSTALKTVVDKAVSSGIVVAAAAGNEGSSGSTSTVGYPAKYPSTIAVGAVNSANQRASFSSAGSELDVMAPGVSIQSTLPGGTYGAYNGTSMATPHVAGAAALILSKHPTWTNAQVRDRLESTATYLGSSFYYGKGLINVQAAAQ.

Gln-2 serves as a coordination point for Ca(2+). A Peptidase S8 domain is found at 5 to 274 (PYGISQIKAP…KGLINVQAAA (270 aa)). Residue Asp-32 is the Charge relay system of the active site. Asp-41 is a Ca(2+) binding site. The Charge relay system role is filled by His-64. Ca(2+) contacts are provided by Leu-75, Asn-77, Ile-79, Val-81, Ala-169, Tyr-171, and Thr-174. Ser-221 acts as the Charge relay system in catalysis.

It belongs to the peptidase S8 family. Ca(2+) serves as cofactor.

It is found in the secreted. The catalysed reaction is Hydrolysis of proteins with broad specificity for peptide bonds, and a preference for a large uncharged residue in P1. Hydrolyzes peptide amides.. Subtilisin is an extracellular alkaline serine protease, it catalyzes the hydrolysis of proteins and peptide amides. The polypeptide is Subtilisin (apr) (Bacillus pumilus (Bacillus mesentericus)).